A 252-amino-acid polypeptide reads, in one-letter code: SPbeta prophage-derived uncharacterized protein YomH (252 aa).

In Bacillus subtilis (strain 168), this protein is SPbeta prophage-derived uncharacterized protein YomH (yomH).